A 230-amino-acid polypeptide reads, in one-letter code: MDYIQMLFTASILSLGYLVFICGKKKKPKPTASTESVSPLNEPKPPPQSAVPQKPAAPAAEEKAPVDPKDPKSKDVDEAKKPDPANSKKSNKSKKPEKGSKKSKKSEKSKKKKTEEKVMSEDKPERPDKLTEEEKPDAKEKKEIEKEKTKEKEKTKEKEKTQEKEKSKDETVPKQHAPSLKRQEGDKNPEITNPIVTPETDEFPTIDEDAEKTKKTEKKDVKTEGTLKKN.

The chain crosses the membrane as a helical span at residues 7–23 (LFTASILSLGYLVFICG). The disordered stretch occupies residues 27-230 (KPKPTASTES…VKTEGTLKKN (204 aa)). Residues 50 to 59 (AVPQKPAAPA) are compositionally biased toward low complexity. Basic and acidic residues predominate over residues 60 to 83 (AEEKAPVDPKDPKSKDVDEAKKPD). Residues 101–112 (KKSKKSEKSKKK) are compositionally biased toward basic residues. Basic and acidic residues predominate over residues 113–173 (KTEEKVMSED…KEKSKDETVP (61 aa)). Acidic residues predominate over residues 199–210 (ETDEFPTIDEDA). The segment covering 211–230 (EKTKKTEKKDVKTEGTLKKN) has biased composition (basic and acidic residues).

It localises to the membrane. This is an uncharacterized protein from Caenorhabditis elegans.